The following is a 285-amino-acid chain: Acetyl-coenzyme A carboxylase carboxyl transferase subunit beta (285 aa).

The CoA carboxyltransferase N-terminal domain maps to 29 to 285; it reads IMTKCPKCKK…ILKIHQEVTK (257 aa). Zn(2+) is bound by residues cysteine 33, cysteine 36, cysteine 52, and cysteine 55. A C4-type zinc finger spans residues 33 to 55; that stretch reads CPKCKKIMYTKELAENLNVCFNC.

Belongs to the AccD/PCCB family. In terms of assembly, acetyl-CoA carboxylase is a heterohexamer composed of biotin carboxyl carrier protein (AccB), biotin carboxylase (AccC) and two subunits each of ACCase subunit alpha (AccA) and ACCase subunit beta (AccD). The cofactor is Zn(2+).

It localises to the cytoplasm. The enzyme catalyses N(6)-carboxybiotinyl-L-lysyl-[protein] + acetyl-CoA = N(6)-biotinyl-L-lysyl-[protein] + malonyl-CoA. It functions in the pathway lipid metabolism; malonyl-CoA biosynthesis; malonyl-CoA from acetyl-CoA: step 1/1. Its function is as follows. Component of the acetyl coenzyme A carboxylase (ACC) complex. Biotin carboxylase (BC) catalyzes the carboxylation of biotin on its carrier protein (BCCP) and then the CO(2) group is transferred by the transcarboxylase to acetyl-CoA to form malonyl-CoA. This Staphylococcus aureus (strain MSSA476) protein is Acetyl-coenzyme A carboxylase carboxyl transferase subunit beta.